A 428-amino-acid chain; its full sequence is 3-phosphoshikimate 1-carboxyvinyltransferase (428 aa).

3 residues coordinate 3-phosphoshikimate: Lys21, Ser22, and Arg26. Residue Lys21 coordinates phosphoenolpyruvate. Positions 92 and 120 each coordinate phosphoenolpyruvate. 3-phosphoshikimate is bound by residues Ser165, Gln167, Asp313, and Lys340. Phosphoenolpyruvate is bound at residue Gln167. Asp313 acts as the Proton acceptor in catalysis. 2 residues coordinate phosphoenolpyruvate: Arg344 and Arg386.

This sequence belongs to the EPSP synthase family. As to quaternary structure, monomer.

The protein resides in the cytoplasm. It carries out the reaction 3-phosphoshikimate + phosphoenolpyruvate = 5-O-(1-carboxyvinyl)-3-phosphoshikimate + phosphate. The protein operates within metabolic intermediate biosynthesis; chorismate biosynthesis; chorismate from D-erythrose 4-phosphate and phosphoenolpyruvate: step 6/7. Its function is as follows. Catalyzes the transfer of the enolpyruvyl moiety of phosphoenolpyruvate (PEP) to the 5-hydroxyl of shikimate-3-phosphate (S3P) to produce enolpyruvyl shikimate-3-phosphate and inorganic phosphate. In Carboxydothermus hydrogenoformans (strain ATCC BAA-161 / DSM 6008 / Z-2901), this protein is 3-phosphoshikimate 1-carboxyvinyltransferase.